The sequence spans 182 residues: Cytidylate kinase (182 aa).

7–15 (GPPGSGKSS) provides a ligand contact to ATP.

This sequence belongs to the cytidylate kinase family. Type 2 subfamily.

The protein resides in the cytoplasm. The catalysed reaction is CMP + ATP = CDP + ADP. It catalyses the reaction dCMP + ATP = dCDP + ADP. This Sulfolobus acidocaldarius (strain ATCC 33909 / DSM 639 / JCM 8929 / NBRC 15157 / NCIMB 11770) protein is Cytidylate kinase (cmk).